Here is a 789-residue protein sequence, read N- to C-terminus: Ataxin-1 (789 aa).

A compositionally biased stretch (basic and acidic residues) spans 1–30 (MKSNQERSNECLPPKKREIPATSRPSEEKA). A disordered region spans residues 1 to 73 (MKSNQERSNE…GTSGEHGLQG (73 aa)). A Glycyl lysine isopeptide (Lys-Gly) (interchain with G-Cter in SUMO) cross-link involves residue K16. Phosphoserine occurs at positions 81 and 87. 2 disordered regions span residues 188–237 (QAPG…RATS) and 296–397 (EVLN…KPGH). Residue K193 forms a Glycyl lysine isopeptide (Lys-Gly) (interchain with G-Cter in SUMO) linkage. S213 carries the phosphoserine modification. T217 carries the phosphothreonine modification. Composition is skewed to polar residues over residues 218–235 (QQNQ…SGRA), 310–325 (ASSS…SSKS), and 360–386 (PNSS…TLND). S228 is subject to Phosphoserine. The interval 468 to 578 (VGSPDMDTPG…TEDFIQSAEI (111 aa)) is self-association. Positions 512–789 (LVTQAAYPAM…CIEGRSNVGK (278 aa)) are interaction with USP7. An RNA-binding region spans residues 514 to 740 (TQAAYPAMVQ…FLTKIEPSKP (227 aa)). The AXH domain occupies 536 to 667 (SPAAASPTLP…SLTLKNLKNG (132 aa)). Glycyl lysine isopeptide (Lys-Gly) (interchain with G-Cter in SUMO) cross-links involve residues K583, K670, and K719. The segment at 736–772 (EPSKPTATRKRRWSAPETRKLEKSEDEPPLTLPKPSL) is disordered. Residue S749 is modified to Phosphoserine. The short motif at 768 to 771 (PKPS) is the Nuclear localization signal element.

It belongs to the ATXN1 family. As to quaternary structure, homooligomer. Interacts with CIC. Interacts with ANP32A, PQBP1, UBQLN4, ATXN1L and USP7. Directly interacts with RBPJ; this interaction is disrupted in the presence of Notch intracellular domain. Competes with ATXN1L for RBPJ-binding. Found in a complex with CIC and ATXN1L. Ubiquitinated by UBE3A, leading to its degradation by the proteasome. In terms of processing, phosphorylation at Ser-749 increases the pathogenicity of proteins with an expanded polyglutamine tract. Post-translationally, sumoylation is dependent on nuclear localization and phosphorylation at Ser-749. It is reduced in the presence of an expanded polyglutamine tract.

It is found in the cytoplasm. The protein localises to the nucleus. Functionally, chromatin-binding factor that repress Notch signaling in the absence of Notch intracellular domain by acting as a CBF1 corepressor. Binds to the HEY promoter and might assist, along with NCOR2, RBPJ-mediated repression. Binds RNA in vitro. May be involved in RNA metabolism. In concert with CIC and ATXN1L, involved brain development. The chain is Ataxin-1 (Atxn1) from Rattus norvegicus (Rat).